The sequence spans 478 residues: Probable glycine dehydrogenase (decarboxylating) subunit 2 (478 aa).

The residue at position 264 (K264) is an N6-(pyridoxal phosphate)lysine.

Belongs to the GcvP family. C-terminal subunit subfamily. As to quaternary structure, the glycine cleavage system is composed of four proteins: P, T, L and H. In this organism, the P 'protein' is a heterodimer of two subunits. The cofactor is pyridoxal 5'-phosphate.

The catalysed reaction is N(6)-[(R)-lipoyl]-L-lysyl-[glycine-cleavage complex H protein] + glycine + H(+) = N(6)-[(R)-S(8)-aminomethyldihydrolipoyl]-L-lysyl-[glycine-cleavage complex H protein] + CO2. Its function is as follows. The glycine cleavage system catalyzes the degradation of glycine. The P protein binds the alpha-amino group of glycine through its pyridoxal phosphate cofactor; CO(2) is released and the remaining methylamine moiety is then transferred to the lipoamide cofactor of the H protein. The protein is Probable glycine dehydrogenase (decarboxylating) subunit 2 of Endomicrobium trichonymphae.